Reading from the N-terminus, the 256-residue chain is Thiazole synthase (256 aa).

Residue Lys-96 is the Schiff-base intermediate with DXP of the active site. Residues Gly-157, 184–185, and 206–207 contribute to the 1-deoxy-D-xylulose 5-phosphate site; these read AG and NT.

Belongs to the ThiG family. Homotetramer. Forms heterodimers with either ThiH or ThiS.

The protein localises to the cytoplasm. The catalysed reaction is [ThiS sulfur-carrier protein]-C-terminal-Gly-aminoethanethioate + 2-iminoacetate + 1-deoxy-D-xylulose 5-phosphate = [ThiS sulfur-carrier protein]-C-terminal Gly-Gly + 2-[(2R,5Z)-2-carboxy-4-methylthiazol-5(2H)-ylidene]ethyl phosphate + 2 H2O + H(+). The protein operates within cofactor biosynthesis; thiamine diphosphate biosynthesis. In terms of biological role, catalyzes the rearrangement of 1-deoxy-D-xylulose 5-phosphate (DXP) to produce the thiazole phosphate moiety of thiamine. Sulfur is provided by the thiocarboxylate moiety of the carrier protein ThiS. In vitro, sulfur can be provided by H(2)S. This is Thiazole synthase from Brucella anthropi (strain ATCC 49188 / DSM 6882 / CCUG 24695 / JCM 21032 / LMG 3331 / NBRC 15819 / NCTC 12168 / Alc 37) (Ochrobactrum anthropi).